The chain runs to 359 residues: Guanine nucleotide-binding protein subunit alpha-11 (359 aa).

2 S-palmitoyl cysteine lipidation sites follow: Cys9 and Cys10. Residues 38–359 (RELKLLLLGT…QHNLKEYNLV (322 aa)) form the G-alpha domain. The interval 41-54 (KLLLLGTGESGKST) is G1 motif. Residues 46 to 53 (GTGESGKS) and 180 to 183 (LRVR) each bind GTP. Ser53 serves as a coordination point for Mg(2+). The G2 motif stretch occupies residues 178–186 (DVLRVRVPT). Thr186 contributes to the Mg(2+) binding site. The tract at residues 201–210 (FRMVDVGGQR) is G3 motif. The segment at 270-277 (ILFLNKKD) is G4 motif. Residues 274-277 (NKKD) and Ala331 each bind GTP. A G5 motif region spans residues 329 to 334 (TCATDT).

The protein belongs to the G-alpha family. G(q) subfamily. As to quaternary structure, g proteins are composed of 3 units; alpha, beta and gamma. The alpha chain contains the guanine nucleotide binding site.

The protein localises to the cell membrane. The protein resides in the cytoplasm. The catalysed reaction is GTP + H2O = GDP + phosphate + H(+). Functionally, guanine nucleotide-binding proteins (G proteins) function as transducers downstream of G protein-coupled receptors (GPCRs) in numerous signaling cascades. The alpha chain contains the guanine nucleotide binding site and alternates between an active, GTP-bound state and an inactive, GDP-bound state. Signaling by an activated GPCR promotes GDP release and GTP binding. The alpha subunit has a low GTPase activity that converts bound GTP to GDP, thereby terminating the signal. Both GDP release and GTP hydrolysis are modulated by numerous regulatory proteins. Signaling is mediated via phospholipase C-beta-dependent inositol lipid hydrolysis for signal propagation: activates phospholipase C-beta: following GPCR activation, GNA11 activates PLC-beta (PLCB1, PLCB2, PLCB3 or PLCB4), leading to production of diacylglycerol (DAG) and inositol 1,4,5-trisphosphate (IP3). In Xenopus laevis (African clawed frog), this protein is Guanine nucleotide-binding protein subunit alpha-11 (gna11).